Here is a 336-residue protein sequence, read N- to C-terminus: Probable allantoicase (336 aa).

This sequence belongs to the allantoicase family.

The enzyme catalyses allantoate + H2O = (S)-ureidoglycolate + urea. It functions in the pathway nitrogen metabolism; (S)-allantoin degradation; (S)-ureidoglycolate from allantoate (aminidohydrolase route): step 1/1. This chain is Probable allantoicase, found in Acinetobacter baumannii (strain ACICU).